A 529-amino-acid chain; its full sequence is CTP synthase (529 aa).

The tract at residues 1–270 (MKYIVVTGGV…ADVVCSYLSL (270 aa)) is amidoligase domain. CTP is bound at residue Ser12. UTP is bound at residue Ser12. Residues 13–18 (GLGKGI) and Asp70 contribute to the ATP site. The Mg(2+) site is built by Asp70 and Glu145. CTP is bound by residues 152–154 (DIE), 191–196 (KTKPTQ), and Lys227. Residues 191–196 (KTKPTQ) and Lys227 each bind UTP. 243 to 245 (KDA) lines the ATP pocket. A Glutamine amidotransferase type-1 domain is found at 293–525 (VAIVSKYGIE…VEACKKNKSS (233 aa)). Gly349 lines the L-glutamine pocket. Cys376 (nucleophile; for glutamine hydrolysis) is an active-site residue. L-glutamine-binding positions include 377 to 380 (LGFQ), Glu400, and Arg455. Catalysis depends on residues His498 and Glu500.

Belongs to the CTP synthase family. As to quaternary structure, homotetramer.

It catalyses the reaction UTP + L-glutamine + ATP + H2O = CTP + L-glutamate + ADP + phosphate + 2 H(+). It carries out the reaction L-glutamine + H2O = L-glutamate + NH4(+). The enzyme catalyses UTP + NH4(+) + ATP = CTP + ADP + phosphate + 2 H(+). It functions in the pathway pyrimidine metabolism; CTP biosynthesis via de novo pathway; CTP from UDP: step 2/2. Its activity is regulated as follows. Allosterically activated by GTP, when glutamine is the substrate; GTP has no effect on the reaction when ammonia is the substrate. The allosteric effector GTP functions by stabilizing the protein conformation that binds the tetrahedral intermediate(s) formed during glutamine hydrolysis. Inhibited by the product CTP, via allosteric rather than competitive inhibition. Catalyzes the ATP-dependent amination of UTP to CTP with either L-glutamine or ammonia as the source of nitrogen. Regulates intracellular CTP levels through interactions with the four ribonucleotide triphosphates. This Methanoculleus marisnigri (strain ATCC 35101 / DSM 1498 / JR1) protein is CTP synthase.